The following is a 328-amino-acid chain: Embigin (328 aa).

A signal peptide spans 1 to 33; the sequence is MRSHTGLRALVAPGCSLLLLYLLAATRPDRAVG. The Extracellular segment spans residues 34–264; sequence DPADSAFTSL…VLSFMVPLKP (231 aa). Asn-55, Asn-62, Asn-75, Asn-100, Asn-117, Asn-189, Asn-196, Asn-214, and Asn-219 each carry an N-linked (GlcNAc...) asparagine glycan. Ig-like domains are found at residues 67-160 and 159-254; these read EQTR…RVPK and PKVH…IKLV. 2 disulfides stabilise this stretch: Cys-88–Cys-144 and Cys-180–Cys-238. A helical membrane pass occupies residues 265 to 285; sequence FLAIIAEVILLVAIILLCEVY. Residues 286-328 are Cytoplasmic-facing; it reads TQKKKNDPDDGKEFEQIEQLKSDDSNGIENNVPRYRKTDSGDQ. A compositionally biased stretch (basic and acidic residues) spans 289–309; it reads KKNDPDDGKEFEQIEQLKSDD. Residues 289 to 328 form a disordered region; it reads KKNDPDDGKEFEQIEQLKSDDSNGIENNVPRYRKTDSGDQ. Ser-310 carries the phosphoserine modification.

In terms of assembly, interacts with SLC16A1, SLC16A6 and SLC16A7. N-glycosylated. As to expression, detected in prostate, mammary gland and erythrocytes (at protein level). Detected in testis, brain, prostate, heart, kidney, liver, mammary gland and lung.

The protein resides in the cell membrane. The protein localises to the synapse. Functionally, plays a role in the outgrowth of motoneurons and in the formation of neuromuscular junctions. Following muscle denervation, promotes nerve terminal sprouting and the formation of additional acetylcholine receptor clusters at synaptic sites without affecting terminal Schwann cell number or morphology. Delays the retraction of terminal sprouts following re-innervation of denervated endplates. Plays a role in targeting the monocarboxylate transporters SLC16A1, SLC16A6 and SLC16A7 to the cell membrane. The polypeptide is Embigin (Emb) (Rattus norvegicus (Rat)).